We begin with the raw amino-acid sequence, 301 residues long: Methionyl-tRNA formyltransferase (301 aa).

109 to 112 (SLLP) is a binding site for (6S)-5,6,7,8-tetrahydrofolate.

It belongs to the Fmt family.

The catalysed reaction is L-methionyl-tRNA(fMet) + (6R)-10-formyltetrahydrofolate = N-formyl-L-methionyl-tRNA(fMet) + (6S)-5,6,7,8-tetrahydrofolate + H(+). Attaches a formyl group to the free amino group of methionyl-tRNA(fMet). The formyl group appears to play a dual role in the initiator identity of N-formylmethionyl-tRNA by promoting its recognition by IF2 and preventing the misappropriation of this tRNA by the elongation apparatus. This Anaplasma marginale (strain St. Maries) protein is Methionyl-tRNA formyltransferase.